The primary structure comprises 370 residues: DNA-directed RNA polymerase II subunit GRINL1A (370 aa).

The tract at residues 1-20 (MSSLPRGFEPQTPEDLGQRS) is disordered. A coiled-coil region spans residues 15-69 (DLGQRSLAELREMLKRQERLLRNVKFICKLPDKGKKISDAVTKLKAAIAEREEVR). The tract at residues 29–68 (KRQERLLRNVKFICKLPDKGKKISDAVTKLKAAIAEREEV) is important for transcription repressor activity. 3 disordered regions span residues 93 to 172 (DGDR…ASEG), 204 to 226 (DPTE…WSGP), and 241 to 283 (KNPM…RRDR). Polar residues predominate over residues 101–131 (NSDQILDTSSPVPGCSSVANITSSQTTSRQQ). Basic and acidic residues predominate over residues 138–152 (RGGDAEAAEAEHTVS). The segment covering 155 to 170 (PTSSSGAPAPSSSQAS) has biased composition (low complexity). The segment covering 205-214 (PTEHHSEGNR) has biased composition (basic and acidic residues). Residues 228-299 (KKPHYMEVLE…TAARLLPLHH (72 aa)) form an interaction with Pol II region. The segment covering 254–266 (VLPSQPRDSSSAC) has biased composition (polar residues). Position 271 is a phosphoserine (S271). Positions 300 to 315 (LPTQLLSIEESLALQR) are important for transcription repressor activity. Residues 303–328 (QLLSIEESLALQRQQKQSYEEIQAKL) adopt a coiled-coil conformation. The segment at 316–341 (QQKQSYEEIQAKLAAQKLAERLNIKM) is interaction with Pol II. Positions 340–370 (KMQSYNPEGESSRKYREVRDEDDDQSSEDEF) are disordered. Positions 349–358 (ESSRKYREVR) are enriched in basic and acidic residues. Acidic residues predominate over residues 359–370 (DEDDDQSSEDEF).

It belongs to the GRINL1 family. In terms of assembly, component of the Pol II(G) complex, which contains the RNA polymerase II (Pol II) core complex subunits and POLR2M and appears to be an abundant form of Pol II. In terms of processing, dephosphorylated at Ser-271 by the PNUTS-PP1 complex, promoting RNA polymerase II transcription pause-release.

Its subcellular location is the nucleus. In terms of biological role, appears to be a stable component of the Pol II(G) complex form of RNA polymerase II (Pol II). Pol II synthesizes mRNA precursors and many functional non-coding RNAs and is the central component of the basal RNA polymerase II transcription machinery. May play a role in Mediator complex-dependent regulation of transcription activation. Acts in vitro as a negative regulator of transcriptional activation; this repression is relieved by the Mediator complex, which restores Pol II(G) activator-dependent transcription to a level equivalent to that of Pol II. This Bos taurus (Bovine) protein is DNA-directed RNA polymerase II subunit GRINL1A (POLR2M).